The following is a 99-amino-acid chain: Carboxysome shell vertex protein CcmL (99 aa).

Residues 1–83 (MKIARVCGTV…IDAAVVAIID (83 aa)) enclose the BMV domain.

This sequence belongs to the CcmL/EutN family. CcmL subfamily. As to quaternary structure, homopentamer. May interact with CcmK2, this occurs at very high CcmK2 concentrations. Interacts with full-length CcmM.

The protein localises to the carboxysome. In terms of biological role, probably forms vertices in the carboxysome, a polyhedral inclusion where RuBisCO (ribulose bisphosphate carboxylase, rbcL-rbcS) is sequestered. Has been modeled to induce curvature upon insertion into an otherwise flat hexagonal molecular layer of CcmK subunits. The sequence is that of Carboxysome shell vertex protein CcmL from Thermosynechococcus vestitus (strain NIES-2133 / IAM M-273 / BP-1).